The following is a 570-amino-acid chain: Trans-cinnamate:CoA ligase, peroxisomal (570 aa).

Positions 568–570 (ARL) match the Microbody targeting signal motif.

The protein belongs to the ATP-dependent AMP-binding enzyme family. Monomer. Requires K(+) as cofactor. As to expression, mostly expressed in flower organs, with highest levels in corollas and petal limbs, and, to a lesser extent, in petal tubes, sepals, pistils, stamen, stigma, anthers and ovaries. Also present at low levels in leaves, stems and roots.

It is found in the peroxisome. It catalyses the reaction (E)-4-coumarate + ATP + CoA = (E)-4-coumaroyl-CoA + AMP + diphosphate. The catalysed reaction is (E)-caffeate + ATP + CoA = (E)-caffeoyl-CoA + AMP + diphosphate. The enzyme catalyses (E)-cinnamate + ATP + CoA = (E)-cinnamoyl-CoA + AMP + diphosphate. It participates in phenylpropanoid metabolism; trans-cinnamate biosynthesis. The protein operates within phytoalexin biosynthesis; 3,4',5-trihydroxystilbene biosynthesis; 3,4',5-trihydroxystilbene from trans-4-coumarate: step 1/2. Functionally, involved in the biosynthesis of floral volatile benzenoid/phenylpropanoid (FVBP) scent (e.g. benzylbenzoate, phenylethylbenzoate, and methylbenzoate). Catalyzes the formation of CoA esters of cinnamic acid, and, with lower efficiency, of 4-coumaric acid and caffeic acid. The chain is Trans-cinnamate:CoA ligase, peroxisomal from Petunia hybrida (Petunia).